The chain runs to 115 residues: uncharacterized protein (115 aa).

The segment at 1-86 (RRPARSGGDG…LSSQLVRPSR (86 aa)) is disordered.

This is an uncharacterized protein from Homo sapiens (Human).